The sequence spans 99 residues: Ragulator complex protein LAMTOR4 (99 aa).

At methionine 1 the chain carries N-acetylmethionine. Position 2 is an N-acetylthreonine; in Ragulator complex protein LAMTOR4, N-terminally processed (threonine 2). Position 67 is a phosphoserine; by PKA (serine 67).

Belongs to the LAMTOR4 family. As to quaternary structure, part of the Ragulator complex composed of LAMTOR1, LAMTOR2, LAMTOR3, LAMTOR4 and LAMTOR5. LAMTOR4 and LAMTOR5 form a heterodimer that interacts, through LAMTOR1, with a LAMTOR2, LAMTOR3 heterodimer. The Ragulator complex interacts with both the mTORC1 complex and heterodimers constituted of the Rag GTPases RagA/RRAGA, RagB/RRAGB, RagC/RRAGC and RagD/RRAGD; regulated by amino acid availability. The Ragulator complex interacts with SLC38A9; the probable amino acid sensor. Component of the lysosomal folliculin complex (LFC), composed of FLCN, FNIP1 (or FNIP2), RagA/RRAGA or RagB/RRAGB GDP-bound, RagC/RRAGC or RagD/RRAGD GTP-bound, and Ragulator. Phosphorylation at Ser-67 by PKA inhibits Ragulator complex assembly.

The protein localises to the lysosome. Its function is as follows. As part of the Ragulator complex it is involved in amino acid sensing and activation of mTORC1, a signaling complex promoting cell growth in response to growth factors, energy levels, and amino acids. Activated by amino acids through a mechanism involving the lysosomal V-ATPase, the Ragulator plays a dual role for the small GTPases Rag (RagA/RRAGA, RagB/RRAGB, RagC/RRAGC and/or RagD/RRAGD): it (1) acts as a guanine nucleotide exchange factor (GEF), activating the small GTPases Rag and (2) mediates recruitment of Rag GTPases to the lysosome membrane. Activated Ragulator and Rag GTPases function as a scaffold recruiting mTORC1 to lysosomes where it is in turn activated. This is Ragulator complex protein LAMTOR4 from Homo sapiens (Human).